We begin with the raw amino-acid sequence, 159 residues long: Putative RING-H2 finger protein ATL69 (159 aa).

A helical membrane pass occupies residues 13 to 33 (LGYGIAIAVSILVLISFIMLA). The RING-type; atypical zinc finger occupies 94-136 (CSICLCDYEAREPVRCIPECNHCFHTDCVDEWLRTSATCPLCR).

The protein belongs to the RING-type zinc finger family. ATL subfamily.

The protein resides in the membrane. It catalyses the reaction S-ubiquitinyl-[E2 ubiquitin-conjugating enzyme]-L-cysteine + [acceptor protein]-L-lysine = [E2 ubiquitin-conjugating enzyme]-L-cysteine + N(6)-ubiquitinyl-[acceptor protein]-L-lysine.. Its pathway is protein modification; protein ubiquitination. In Arabidopsis thaliana (Mouse-ear cress), this protein is Putative RING-H2 finger protein ATL69 (ATL69).